Reading from the N-terminus, the 565-residue chain is MKIPSQQVLLALPLLASPAQSYPGKHPRCSAGDACWPKEHVWQDFNSTISGRLIRTFPAAAVCHTAQYDAAACSVAKERWTDSFWRTNQTGAYSAILWELGEKGQCFINTPKEDRCDQGIVPYYSVSASGVKDIEKAVKFADKHDLYLVVKNTGHDHLGRSSGSGAFSIWTHNLKGKEWHKSFKPKGAPSNVSGIPAVTLQAGEQLLDVYKAAAAEGVTFAGGSAQTVGAAGGFMTGGGVSPFSHFYGLAVDNVLEVNLVTAQGKAKTINQYTDPDYFYALRGGGGSAWGVITSVTYKTHPKPTHIRVGIAQLNITTEDSRRVVIEKTLQALPDITEAGWVGYGVYATEKSNPTAFQVIFLQPNATMENFNKTFEPMNEIATLPGVTGGAVSYVFPDFLEYSKNFLRDPNIATNVIDASRLVSRQVLTERARDLVDLMFEYPTTGPGFNSIVKVNSDERDNTAVHSSFKNSRALISFSVDWADNASEKEKKAAKKTSAEVSKRLAEIVGKETGTYLNEASPYEPDWQNAFWGDKYARLLSIKRRIDPKNLFVCNRCVGTDIILEP.

Residues 1 to 21 (MKIPSQQVLLALPLLASPAQS) form the signal peptide. Asn46 and Asn88 each carry an N-linked (GlcNAc...) asparagine glycan. An FAD-binding PCMH-type domain is found at 118-302 (QGIVPYYSVS…TSVTYKTHPK (185 aa)). His155 bears the Pros-8alpha-FAD histidine mark. N-linked (GlcNAc...) asparagine glycosylation is found at Asn191, Asn314, Asn364, Asn371, and Asn484.

It belongs to the oxygen-dependent FAD-linked oxidoreductase family. The cofactor is FAD.

It localises to the secreted. This is an uncharacterized protein from Arthroderma benhamiae (strain ATCC MYA-4681 / CBS 112371) (Trichophyton mentagrophytes).